Reading from the N-terminus, the 445-residue chain is Putative ankyrin repeat protein L797 (445 aa).

4 ANK repeats span residues 73-102 (FMEDCLRQSFYDGQLYIADYLVDKGADIYS), 285-314 (NHEHIANLATQNGHIEILKYLVEEKYELVG), 315-344 (NLYIIMFLACQYGHLEIIKYLVELGVDIRQ), and 346-375 (LDAFIYLLWQGSYFNILKYLLTVDSDIINI).

This chain is Putative ankyrin repeat protein L797, found in Acanthamoeba polyphaga (Amoeba).